The primary structure comprises 564 residues: Major facilitator superfamily transporter MPN_076 (564 aa).

Transmembrane regions (helical) follow at residues 1–21 (MLWA…FVID), 65–85 (ITLL…KFGY), 89–109 (VMIM…GDPL), 176–196 (IAGY…GTTL), 220–240 (NLWG…FQSV), 249–269 (VFIL…FAWF), 306–326 (MIGM…GGWW), 358–378 (AGLP…YMVF), 404–424 (IVIV…FAFV), 425–445 (AIAT…ILIL), 457–477 (VSVL…AFDI), and 501–521 (GAIA…AIVV).

The protein belongs to the major facilitator superfamily.

The protein resides in the cell membrane. This Mycoplasma pneumoniae (strain ATCC 29342 / M129 / Subtype 1) (Mycoplasmoides pneumoniae) protein is Major facilitator superfamily transporter MPN_076.